The chain runs to 380 residues: Probable tRNA sulfurtransferase (380 aa).

The region spanning 58-162 is the THUMP domain; that stretch reads EEVIERLKKV…MAFVYAGVIE (105 aa). ATP contacts are provided by residues 178 to 179, 203 to 204, arginine 260, glycine 282, and glutamine 291; these read LL and YF.

The protein belongs to the ThiI family.

Its subcellular location is the cytoplasm. It carries out the reaction [ThiI sulfur-carrier protein]-S-sulfanyl-L-cysteine + a uridine in tRNA + 2 reduced [2Fe-2S]-[ferredoxin] + ATP + H(+) = [ThiI sulfur-carrier protein]-L-cysteine + a 4-thiouridine in tRNA + 2 oxidized [2Fe-2S]-[ferredoxin] + AMP + diphosphate. The catalysed reaction is [ThiS sulfur-carrier protein]-C-terminal Gly-Gly-AMP + S-sulfanyl-L-cysteinyl-[cysteine desulfurase] + AH2 = [ThiS sulfur-carrier protein]-C-terminal-Gly-aminoethanethioate + L-cysteinyl-[cysteine desulfurase] + A + AMP + 2 H(+). It functions in the pathway cofactor biosynthesis; thiamine diphosphate biosynthesis. Functionally, catalyzes the ATP-dependent transfer of a sulfur to tRNA to produce 4-thiouridine in position 8 of tRNAs, which functions as a near-UV photosensor. Also catalyzes the transfer of sulfur to the sulfur carrier protein ThiS, forming ThiS-thiocarboxylate. This is a step in the synthesis of thiazole, in the thiamine biosynthesis pathway. The sulfur is donated as persulfide by IscS. The sequence is that of Probable tRNA sulfurtransferase from Thermoanaerobacter pseudethanolicus (strain ATCC 33223 / 39E) (Clostridium thermohydrosulfuricum).